The chain runs to 207 residues: DNA-directed RNA polymerase subunit alpha (207 aa).

Belongs to the RNA polymerase alpha chain family. As to quaternary structure, in plastids the minimal PEP RNA polymerase catalytic core is composed of four subunits: alpha, beta, beta', and beta''. When a (nuclear-encoded) sigma factor is associated with the core the holoenzyme is formed, which can initiate transcription.

It localises to the plastid. It is found in the chloroplast. It carries out the reaction RNA(n) + a ribonucleoside 5'-triphosphate = RNA(n+1) + diphosphate. DNA-dependent RNA polymerase catalyzes the transcription of DNA into RNA using the four ribonucleoside triphosphates as substrates. The chain is DNA-directed RNA polymerase subunit alpha (rpoA) from Euglena anabaena (Euglenaria anabaena).